Reading from the N-terminus, the 304-residue chain is Protease HtpX homolog (304 aa).

Helical transmembrane passes span 14 to 34 (VFIV…IGII) and 39 to 59 (YLNG…IMVM). Position 144 (H144) interacts with Zn(2+). Residue E145 is part of the active site. A Zn(2+)-binding site is contributed by H148. Transmembrane regions (helical) follow at residues 161–181 (IALV…IFWG) and 202–222 (LIIY…ATAI). E231 contributes to the Zn(2+) binding site. A disordered region spans residues 276–295 (SPLKSKKDKPGIFDSHPPIS).

Belongs to the peptidase M48B family. The cofactor is Zn(2+).

The protein localises to the cell membrane. The chain is Protease HtpX homolog from Listeria welshimeri serovar 6b (strain ATCC 35897 / DSM 20650 / CCUG 15529 / CIP 8149 / NCTC 11857 / SLCC 5334 / V8).